A 466-amino-acid chain; its full sequence is Ras GTPase-activating protein-binding protein 1 (466 aa).

The NTF2 domain occupies Val-11–Tyr-133. Residues Lys-36, Lys-50, Lys-59, Lys-64, Lys-76, and Lys-123 each participate in a glycyl lysine isopeptide (Lys-Gly) (interchain with G-Cter in ubiquitin) cross-link. The segment at Val-142–Glu-225 is acidic disordered region. Thr-143 is modified (phosphothreonine). Disordered regions lie at residues Glu-144 to Thr-172 and Glu-184 to Gln-243. Acidic residues-rich tracts occupy residues Pro-145–Glu-157 and Glu-185–Pro-206. Ser-149 carries the phosphoserine modification. 4 positions are modified to phosphoserine: Ser-231, Ser-232, Ser-250, and Ser-253. The interval Thr-255 to Glu-329 is disordered. Composition is skewed to basic and acidic residues over residues Pro-297–Arg-307 and Pro-318–Glu-329. Residues His-340 to Thr-415 enclose the RRM domain. Glycyl lysine isopeptide (Lys-Gly) (interchain with G-Cter in ubiquitin) cross-links involve residues Lys-353 and Lys-357. Residue Ser-373 is modified to Phosphoserine. A Glycyl lysine isopeptide (Lys-Gly) (interchain with G-Cter in ubiquitin) cross-link involves residue Lys-376. Lys-376 is modified (N6-acetyllysine; alternate). Lys-376 is covalently cross-linked (Glycyl lysine isopeptide (Lys-Gly) (interchain with G-Cter in SUMO2); alternate). Lys-393 participates in a covalent cross-link: Glycyl lysine isopeptide (Lys-Gly) (interchain with G-Cter in ubiquitin); alternate. The interval Val-410–Gln-466 is RG-rich region. The segment covering Lys-413 to Leu-428 has biased composition (basic and acidic residues). Residues Lys-413–Gln-466 form a disordered region. Arg-429 bears the Asymmetric dimethylarginine mark. Over residues Gly-430–Arg-447 the composition is skewed to gly residues. An Asymmetric dimethylarginine; alternate modification is found at Arg-435. Arg-435 bears the Dimethylated arginine; alternate mark. An Omega-N-methylarginine; alternate modification is found at Arg-435. Arg-447 is modified (omega-N-methylarginine). Residue Arg-460 is modified to Dimethylated arginine; alternate. Arg-460 carries the post-translational modification Omega-N-methylarginine; alternate. The residue at position 465 (Arg-465) is an Omega-N-methylarginine.

As to quaternary structure, homodimer and oligomer. Component of a TAU mRNP complex, at least composed of IGF2BP1, ELAVL4 and G3BP1. Binds to the SH3 domain of Ras GTPase-activating protein (RASA1) in proliferating cells. No interaction in quiescent cells. Interacts (via NTF2 domain) with USP10; inhibiting stress granule formation by lowering G3BP1 valence. Interacts (via NTF2 domain) with CAPRIN1; promoting stress granule formation by lowering the saturation-concentration of G3BP1. Interacts (via NTF2 domain) with UBAP2L; promoting stress granule formation. Associates (via RG-rich region) with 40S ribosome subunits. Interacts with RPTOR and SPAG5; this complex is increased by oxidative stress. Interacts with ATXN2L. Interacts with STYXL1. Interacts with CGAS (via N-terminus); this interaction promotes the DNA-binding and activation of CGAS. Interacts (via C-terminus) with RIGI. Interacts with PABPC1. Interacts with QKI (isoforms QKI6 and QKI7); directing N(7)-methylguanine-containing mRNAs to stress granules. In terms of assembly, (Microbial infection) Interacts with Semliki forest virus non-structural protein 3 (via C-terminus); this interaction inhibits the formation of stress granules on viral mRNAs and the nsp3-G3BP1 complexes bind viral RNAs and probably orchestrate the assembly of viral replication complexes. (Microbial infection) Interacts with Chikungunya virus non-structural protein 3 (via C-terminus); this interaction inhibits the formation of stress granules on viral mRNAs and the nsp3-G3BP1 complexes bind viral RNAs and probably orchestrate the assembly of viral replication complexes. As to quaternary structure, (Microbial infection) Interacts with Sindbis virus non-structural protein 3 (via C-terminus); this interaction inhibits the formation of stress granules on viral mRNAs and the nsp3-G3BP1 complexes bind viral RNAs and probably orchestrate the assembly of viral replication complexes. In terms of assembly, (Microbial infection) Interacts with Zika virus capsid protein C; this interaction is probably linked to the inhibition of stress granules formation by the virus. (Microbial infection) Interacts with reovirus type 2 protein sigma-NS; this interaction induces the relocalization of G3BP1 to the outer periphery of sigma-NS/mu-Ns viral factories and is probably involved in the suppression of the integrated stress response by the virus. As to quaternary structure, (Microbial infection) Interacts with SARS-CoV-2 N protein; the interaction is enhanced by host HDAC6 which deacetylates the viral N protein and promotes N protein association with G3BP1, disrupting stress granule formation and facilitating viral replication. Interacts with HDAC6; the interaction increases during SARS-CoV-2 infection. Mg(2+) serves as cofactor. In terms of processing, phosphorylation of the acidic disordered region regulates stress granule assembly. RASA1-dependent phosphorylation of Ser-149 induces a conformational change that prevents self-association. Dephosphorylation after HRAS activation is required for stress granule assembly. Ser-149 phosphorylation induces partial nuclear localization. Ubiquitinated by TRIM21 via 'Lys-63'-linked polyubiquitination in the NTF2 domain in response to heat shock, leading to stress granule disassembly: ubiquitination promotes interaction with the FAF2 adapter, followed by interaction with VCP, which extracts G3BP1 from stress granules, leading to stress granule disassembly. In case of prolonged stress, ubiquitination by TRIM21 leads to autophagy-dependent degradation of G3BP1 via recruitment of ubiquitinated G3BP1 by SQSTM1 and/or CALCOCO2 to autophagosomes. Post-translationally, (Microbial infection) Cleaved by human enterovirus 71; this cleavage induces the disassembly of cytoplasmic stress granules. Cleaved by Foot-and-mouth disease virus; this cleavage suppresses the formation of cytoplasmic stress granules. In terms of processing, arg-435 is dimethylated, probably to asymmetric dimethylarginine. (Microbial infection) Cleaved by Encephalomyocarditis virus protease 3C; this cleavage suppresses the formation of cytoplasmic stress granules. As to expression, ubiquitous.

It localises to the cytoplasm. It is found in the cytosol. The protein localises to the perikaryon. The protein resides in the stress granule. Its subcellular location is the nucleus. It catalyses the reaction ATP + H2O = ADP + phosphate + H(+). Its activity is regulated as follows. Under physiological conditions, G3BP1 adopts a compact state that is stabilized by intramolecular interactions between the RG-rich and the acidic regions that inhibit phase separation. Upon stress, polysomes disassemble and mRNAs are released in an unfolded protein-free state. Binding of unfolded mRNA to G3BP1 outcompetes the intramolecular interactions and RNA-bound G3BP1 adopts an expanded conformation in which the RG-rich region becomes exposed to engage in protein-protein and protein-RNA interactions, allowing physical cross-linking of RNA molecules to form protein-RNA condensates, leading to liquid-liquid phase separation (LLPS). In terms of biological role, protein involved in various processes, such as stress granule formation and innate immunity. Plays an essential role in stress granule formation. Stress granules are membraneless compartments that store mRNAs and proteins, such as stalled translation pre-initiation complexes, in response to stress. Promotes formation of stress granules phase-separated membraneless compartment by undergoing liquid-liquid phase separation (LLPS) upon unfolded RNA-binding: functions as a molecular switch that triggers RNA-dependent LLPS in response to a rise in intracellular free RNA concentrations. Also acts as an ATP- and magnesium-dependent helicase: unwinds DNA/DNA, RNA/DNA, and RNA/RNA substrates with comparable efficiency. Acts unidirectionally by moving in the 5' to 3' direction along the bound single-stranded DNA. Unwinds preferentially partial DNA and RNA duplexes having a 17 bp annealed portion and either a hanging 3' tail or hanging tails at both 5'- and 3'-ends. Plays an essential role in innate immunity by promoting CGAS and RIGI activity. Participates in the DNA-triggered cGAS/STING pathway by promoting the DNA binding and activation of CGAS. Triggers the condensation of cGAS, a process probably linked to the formation of membrane-less organelles. Also enhances RIGI-induced type I interferon production probably by helping RIGI at sensing pathogenic RNA. May also act as a phosphorylation-dependent sequence-specific endoribonuclease in vitro: Cleaves exclusively between cytosine and adenine and cleaves MYC mRNA preferentially at the 3'-UTR. The polypeptide is Ras GTPase-activating protein-binding protein 1 (Homo sapiens (Human)).